A 456-amino-acid polypeptide reads, in one-letter code: Hydroxymethylglutaryl coenzyme A synthase (456 aa).

Alanine 34 lines the (3S)-3-hydroxy-3-methylglutaryl-CoA pocket. Glutamate 85 acts as the Proton donor/acceptor in catalysis. The (3S)-3-hydroxy-3-methylglutaryl-CoA site is built by cysteine 119, threonine 161, serine 211, histidine 258, lysine 267, asparagine 335, and serine 369. Residue cysteine 119 is the Acyl-thioester intermediate of the active site. Histidine 258 serves as the catalytic Proton donor/acceptor.

This sequence belongs to the thiolase-like superfamily. HMG-CoA synthase family.

It carries out the reaction acetoacetyl-CoA + acetyl-CoA + H2O = (3S)-3-hydroxy-3-methylglutaryl-CoA + CoA + H(+). HMG-CoA synthase; part of the gene cluster that mediates the biosynthesis of 1233A, a natural compound known as an inhibitor of HMG-CoA synthase in the mevalonate pathway and with antibacterial and antifungal activities. This enzyme condenses acetyl-CoA with acetoacetyl-CoA to form HMG-CoA, which is the substrate for HMG-CoA reductase. As part of the 1233A biosynthesis cluster, is involved in conferring self-resistance to 1233A. The sequence is that of Hydroxymethylglutaryl coenzyme A synthase from Fusarium sp.